A 394-amino-acid polypeptide reads, in one-letter code: Alpha-2B adrenergic receptor (394 aa).

The helical transmembrane segment at 1–25 (AIAAVITFLILFTIFGNALVILAVL) threads the bilayer. Residues 26-36 (TSRSLRAPQNL) are Cytoplasmic-facing. The helical transmembrane segment at 37-62 (FLVSLAAADILVATLIIPFSLANELL) threads the bilayer. Over 63-72 (GYWYFRRTWC) the chain is Extracellular. A disulfide bridge links Cys72 with Cys151. The chain crosses the membrane as a helical span at residues 73–95 (EVYLALDVLFCTSSIVHLCAISL). At 96 to 117 (DRYWAVSRALEYNCKRTPRRIK) the chain is on the cytoplasmic side. A helical transmembrane segment spans residues 118-140 (CIILTVWLIAAAISLPPLIYKGD). Residues 141–156 (QGPQPHGAPQCKLNQE) lie on the Extracellular side of the membrane. A helical transmembrane segment spans residues 157–180 (AWYILSSSLGSFFVPCLIMILVYL). The Cytoplasmic portion of the chain corresponds to 181-358 (RIYLIAKRSH…LSREKRFTFV (178 aa)). The segment at 191–318 (RRGPRAKGGP…GSPPLQQPQG (128 aa)) is disordered. The segment covering 281–298 (LEEEAEEEEEEEEEEDEP) has biased composition (acidic residues). The segment covering 299–312 (QAVPVSPASVGSPP) has biased composition (low complexity). Residues 359 to 382 (LAVVIGVFVLCWFPFFFSYSLSAI) form a helical membrane-spanning segment. Over 383-391 (CPQQCRVPH) the chain is Extracellular. Residues 392–394 (GLF) traverse the membrane as a helical segment.

Belongs to the G-protein coupled receptor 1 family. Adrenergic receptor subfamily. ADRA2B sub-subfamily. As to quaternary structure, interacts with RAB26. Interacts with PPP1R9B. Interacts with GGA1, GGA2 and GGA3.

Its subcellular location is the cell membrane. Functionally, alpha-2 adrenergic receptors mediate the catecholamine-induced inhibition of adenylate cyclase through the action of G proteins. The sequence is that of Alpha-2B adrenergic receptor (ADRA2B) from Oryctolagus cuniculus (Rabbit).